We begin with the raw amino-acid sequence, 273 residues long: MSAAPRIGILGAGGRMGRILIQAVQQAGYQLGAAVVRPESTLIGADAGELAGIGSIGVKLTGSLAEVLEDCDVVIDFSTPAATSEHLKLCREAGVAIVIGTTGMSDEQKAELDETAKHIPVVYAANYSVGVNVSIKLLELAAKVFGDTVDIEVIEAHHRHKVDAPSGTALMMGEAIADTLGRNLKEVAVYGREGHTGPRDRQTIGFETIRGGDIVGEHTVMFIGEGERVEVTHKATNRMNFAAGAVRAAAWVVGREARKYDMKDVLGLNDVQV.

11 to 16 is a binding site for NAD(+); sequence GAGGRM. An NADP(+)-binding site is contributed by arginine 37. NAD(+) is bound by residues 100–102 and 124–127; these read GTT and AANY. Histidine 157 serves as the catalytic Proton donor/acceptor. Histidine 158 is a binding site for (S)-2,3,4,5-tetrahydrodipicolinate. Lysine 161 functions as the Proton donor in the catalytic mechanism. 167-168 serves as a coordination point for (S)-2,3,4,5-tetrahydrodipicolinate; it reads GT.

The protein belongs to the DapB family.

Its subcellular location is the cytoplasm. It catalyses the reaction (S)-2,3,4,5-tetrahydrodipicolinate + NAD(+) + H2O = (2S,4S)-4-hydroxy-2,3,4,5-tetrahydrodipicolinate + NADH + H(+). The enzyme catalyses (S)-2,3,4,5-tetrahydrodipicolinate + NADP(+) + H2O = (2S,4S)-4-hydroxy-2,3,4,5-tetrahydrodipicolinate + NADPH + H(+). The protein operates within amino-acid biosynthesis; L-lysine biosynthesis via DAP pathway; (S)-tetrahydrodipicolinate from L-aspartate: step 4/4. Its function is as follows. Catalyzes the conversion of 4-hydroxy-tetrahydrodipicolinate (HTPA) to tetrahydrodipicolinate. The sequence is that of 4-hydroxy-tetrahydrodipicolinate reductase from Acinetobacter baumannii (strain AB307-0294).